Reading from the N-terminus, the 284-residue chain is Proteasome subunit beta (284 aa).

The propeptide at 1-56 (MSPMESSSTRFPGQALPAAYLTPGSSSFTDFLRVAAPELMPGSRPVPDGAVEAPHG) is removed in mature form; by autocatalysis. Thr57 (nucleophile) is an active-site residue.

It belongs to the peptidase T1B family. In terms of assembly, the 20S proteasome core is composed of 14 alpha and 14 beta subunits that assemble into four stacked heptameric rings, resulting in a barrel-shaped structure. The two inner rings, each composed of seven catalytic beta subunits, are sandwiched by two outer rings, each composed of seven alpha subunits. The catalytic chamber with the active sites is on the inside of the barrel. Has a gated structure, the ends of the cylinder being occluded by the N-termini of the alpha-subunits. Is capped by the proteasome-associated ATPase, ARC.

It is found in the cytoplasm. It carries out the reaction Cleavage of peptide bonds with very broad specificity.. It participates in protein degradation; proteasomal Pup-dependent pathway. With respect to regulation, the formation of the proteasomal ATPase ARC-20S proteasome complex, likely via the docking of the C-termini of ARC into the intersubunit pockets in the alpha-rings, may trigger opening of the gate for substrate entry. Interconversion between the open-gate and close-gate conformations leads to a dynamic regulation of the 20S proteasome proteolysis activity. Functionally, component of the proteasome core, a large protease complex with broad specificity involved in protein degradation. The chain is Proteasome subunit beta from Saccharopolyspora erythraea (strain ATCC 11635 / DSM 40517 / JCM 4748 / NBRC 13426 / NCIMB 8594 / NRRL 2338).